The primary structure comprises 290 residues: 2-dehydro-3-deoxyphosphooctonate aldolase 1 (290 aa).

Position 2 is an N-acetylalanine (A2).

It belongs to the KdsA family. As to expression, expressed in shoots.

Its subcellular location is the cytoplasm. The catalysed reaction is D-arabinose 5-phosphate + phosphoenolpyruvate + H2O = 3-deoxy-alpha-D-manno-2-octulosonate-8-phosphate + phosphate. In terms of biological role, catalyzes the stereospecific condensation of D-arabinose 5-phosphate and phosphoenolpyruvate to form 3-deoxy-D-manno-octulosonate 8-phosphate (KDO-8-phosphate) and inorganic phosphate. Involved in the biosynthesis of 3-deoxy-D-manno-octulosonate (KDO) which is an indispensable component of rhamnogalacturonan II (RG-II), a structurally complex pectic polysaccharide of the primary cell wall. RG-II is essential for the cell wall integrity of rapidly growing tissues and pollen tube growth and elongation. This chain is 2-dehydro-3-deoxyphosphooctonate aldolase 1 (KDSA1), found in Arabidopsis thaliana (Mouse-ear cress).